A 306-amino-acid chain; its full sequence is D-alanine--D-alanine ligase (306 aa).

The ATP-grasp domain maps to 104-303 (KMLWKAFGLP…FEQLVVKILE (200 aa)). Position 134–189 (134–189 (VAKLGLPLMVKPSLEGSSVGLTKVKAVEELKSAVEYALKFDNTILIEEWLAGDELT)) interacts with ATP. The Mg(2+) site is built by Asp257, Glu270, and Asn272.

The protein belongs to the D-alanine--D-alanine ligase family. Mg(2+) is required as a cofactor. Requires Mn(2+) as cofactor.

The protein resides in the cytoplasm. The enzyme catalyses 2 D-alanine + ATP = D-alanyl-D-alanine + ADP + phosphate + H(+). It functions in the pathway cell wall biogenesis; peptidoglycan biosynthesis. Cell wall formation. This Haemophilus influenzae (strain PittGG) protein is D-alanine--D-alanine ligase.